Here is a 447-residue protein sequence, read N- to C-terminus: Signal recognition particle 54 kDa protein (447 aa).

GTP-binding positions include 103–110 (GVQGSGKT), 185–189 (DTAGR), and 245–248 (TKMD).

It belongs to the GTP-binding SRP family. SRP54 subfamily. As to quaternary structure, part of the signal recognition particle protein translocation system, which is composed of SRP and FtsY. Archaeal SRP consists of a 7S RNA molecule of 300 nucleotides and two protein subunits: SRP54 and SRP19.

The protein resides in the cytoplasm. The enzyme catalyses GTP + H2O = GDP + phosphate + H(+). Its function is as follows. Involved in targeting and insertion of nascent membrane proteins into the cytoplasmic membrane. Binds to the hydrophobic signal sequence of the ribosome-nascent chain (RNC) as it emerges from the ribosomes. The SRP-RNC complex is then targeted to the cytoplasmic membrane where it interacts with the SRP receptor FtsY. This chain is Signal recognition particle 54 kDa protein, found in Saccharolobus islandicus (strain Y.N.15.51 / Yellowstone #2) (Sulfolobus islandicus).